The primary structure comprises 167 residues: Protein-export protein SecB (167 aa).

This sequence belongs to the SecB family. As to quaternary structure, homotetramer, a dimer of dimers. One homotetramer interacts with 1 SecA dimer.

The protein resides in the cytoplasm. One of the proteins required for the normal export of preproteins out of the cell cytoplasm. It is a molecular chaperone that binds to a subset of precursor proteins, maintaining them in a translocation-competent state. It also specifically binds to its receptor SecA. This chain is Protein-export protein SecB, found in Wolbachia pipientis wMel.